A 665-amino-acid chain; its full sequence is UvrABC system protein B (665 aa).

A Helicase ATP-binding domain is found at 25-412 (ASIEGGNRYQ…ENRIVEQVIR (388 aa)). 38 to 45 (GATGTGKT) contacts ATP. The Beta-hairpin signature appears at 91 to 114 (YYDYYQPEAYIPVTDTYIEKTAAI). In terms of domain architecture, Helicase C-terminal spans 429 to 583 (QIDDLLGEIK…VAYNKLHGIT (155 aa)). Residues 626–661 (PNLIDKLEAQMKEASKKLEFEEAAKLRDRIKQLRDK) enclose the UVR domain.

Belongs to the UvrB family. As to quaternary structure, forms a heterotetramer with UvrA during the search for lesions. Interacts with UvrC in an incision complex.

It is found in the cytoplasm. The UvrABC repair system catalyzes the recognition and processing of DNA lesions. A damage recognition complex composed of 2 UvrA and 2 UvrB subunits scans DNA for abnormalities. Upon binding of the UvrA(2)B(2) complex to a putative damaged site, the DNA wraps around one UvrB monomer. DNA wrap is dependent on ATP binding by UvrB and probably causes local melting of the DNA helix, facilitating insertion of UvrB beta-hairpin between the DNA strands. Then UvrB probes one DNA strand for the presence of a lesion. If a lesion is found the UvrA subunits dissociate and the UvrB-DNA preincision complex is formed. This complex is subsequently bound by UvrC and the second UvrB is released. If no lesion is found, the DNA wraps around the other UvrB subunit that will check the other stand for damage. The sequence is that of UvrABC system protein B from Nostoc sp. (strain PCC 7120 / SAG 25.82 / UTEX 2576).